The primary structure comprises 300 residues: N-acetylmannosamine kinase (300 aa).

Residues 5-12 and 132-139 each bind ATP; these read ALDIGGTK and GVGGGIVL. Residues H156, C166, C168, and C173 each contribute to the Zn(2+) site.

It belongs to the ROK (NagC/XylR) family. NanK subfamily. As to quaternary structure, homodimer.

It catalyses the reaction an N-acyl-D-mannosamine + ATP = an N-acyl-D-mannosamine 6-phosphate + ADP + H(+). The protein operates within amino-sugar metabolism; N-acetylneuraminate degradation; D-fructose 6-phosphate from N-acetylneuraminate: step 2/5. In terms of biological role, catalyzes the phosphorylation of N-acetylmannosamine (ManNAc) to ManNAc-6-P. The protein is N-acetylmannosamine kinase of Haemophilus influenzae (strain 86-028NP).